The sequence spans 373 residues: GDP-mannose 4,6 dehydratase 2 (373 aa).

Residues 1–15 (MASENNGSRSDSESI) are compositionally biased toward polar residues. The interval 1–21 (MASENNGSRSDSESITAPKAD) is disordered. Residues 35 to 40 (GITGQD), R60, 91 to 92 (DL), 113 to 117 (LAAQS), and Y128 contribute to the NADP(+) site. Substrate is bound at residue S117. Residue S162 participates in substrate binding. S162 is a catalytic residue. Residues E164 and Y185 each act as nucleophile in the active site. Y185 contacts substrate. NADP(+) is bound at residue K189. Position 214 (N214) interacts with substrate. H215 and R220 together coordinate NADP(+). Residues 220 to 228 (RGENFVTRK), G247, R253, and 314 to 317 (RPAE) contribute to the substrate site.

It belongs to the NAD(P)-dependent epimerase/dehydratase family. GDP-mannose 4,6-dehydratase subfamily. Homotetramer. Binds to GER1. NADP(+) serves as cofactor. Expressed in roots, flowers, siliques, leaves and stems. Not expressed in the root meristem and the proximal part of the elongation zone, or in emerging lateral roots. Expressed in trichomes and guard cells, and in pollen just before anthesis.

The catalysed reaction is GDP-alpha-D-mannose = GDP-4-dehydro-alpha-D-rhamnose + H2O. It participates in nucleotide-sugar biosynthesis; GDP-L-fucose biosynthesis via de novo pathway; GDP-L-fucose from GDP-alpha-D-mannose: step 1/2. In terms of biological role, catalyzes the conversion of GDP-D-mannose to GDP-4-dehydro-6-deoxy-D-mannose. The protein is GDP-mannose 4,6 dehydratase 2 (MUR1) of Arabidopsis thaliana (Mouse-ear cress).